Reading from the N-terminus, the 573-residue chain is MRTENTATLNLIWGALILEELARLGVQHVCMAPGSRSTPLTLAAAQQTKLQRHLHFDERGLGFMALGLAKASRAPVAIITTSGTAVANLYPAIVEAWLTHVPLIVLSGDRPPELLGCGANQAIVQPGIFANYATQVNLPTPDAHIAPQALLTTVDEAVANQTRPVHINCMYREPLYPSELSGVILDTESPYLKPLQTWLQLARPYTQYGKCKQLSSPSDDAIMRFVHGKGVIVVGTLTPEQDPQQLIALSQKIGWPLLTDAQSQLRQHPAAIGNIDQLLQHPRARNLLQEADRVLVFGGRLLSKRVIGYLAEQNWHSYWQVLPEQDRLDPSHNAKHIWHANAEQFAALNWYRSSSANWANTLITYNDELHNLFVRNIDQGEFGEAQVIRAIANTRPLEQQLFIGNSLPVRLYDMYAPVSCCTATTYTNRGASGIDGLLATACGIAAHKGKATSLIIGDLSQLHDLNSLAIAKGLTSPLVIVILNNDGGNIFNLLPVPNEQVRSDYYRLSHGLEFGYAAAMFNLPYNQVDNLADFQDSYNEALDFQGASIIEVNVSQNQASDQIAALNLWVKQS.

This sequence belongs to the TPP enzyme family. MenD subfamily. As to quaternary structure, homodimer. The cofactor is Mg(2+). Mn(2+) is required as a cofactor. Requires thiamine diphosphate as cofactor.

It catalyses the reaction isochorismate + 2-oxoglutarate + H(+) = 5-enolpyruvoyl-6-hydroxy-2-succinyl-cyclohex-3-ene-1-carboxylate + CO2. It functions in the pathway quinol/quinone metabolism; 1,4-dihydroxy-2-naphthoate biosynthesis; 1,4-dihydroxy-2-naphthoate from chorismate: step 2/7. Its pathway is quinol/quinone metabolism; menaquinone biosynthesis. In terms of biological role, catalyzes the thiamine diphosphate-dependent decarboxylation of 2-oxoglutarate and the subsequent addition of the resulting succinic semialdehyde-thiamine pyrophosphate anion to isochorismate to yield 2-succinyl-5-enolpyruvyl-6-hydroxy-3-cyclohexene-1-carboxylate (SEPHCHC). The polypeptide is 2-succinyl-5-enolpyruvyl-6-hydroxy-3-cyclohexene-1-carboxylate synthase (Shewanella baltica (strain OS195)).